Consider the following 557-residue polypeptide: TNF receptor-associated factor 5 (557 aa).

Residues 45–85 (CAFCHSVLHNPHQTGCGHRFCQHCILSLRELNTVPICPVDK) form an RING-type zinc finger. TRAF-type zinc fingers lie at residues 127 to 181 (DHLQ…INLQ) and 182 to 239 (NHEE…RNLQ). Positions 237-342 (NLQQHEHSAL…VNQQQNKFDL (106 aa)) form a coiled coil. Lys318 participates in a covalent cross-link: Glycyl lysine isopeptide (Lys-Gly) (interchain with G-Cter in ubiquitin). Residues 345–557 (LMEAVDTVKQ…AVDLTDLEDL (213 aa)) form an interaction with EIF2AK2/PKR region. The region spanning 403–549 (NGKLIWKVTD…DDTLFLKVAV (147 aa)) is the MATH domain.

The protein belongs to the TNF receptor-associated factor family. A subfamily. In terms of assembly, homotrimer. Heteromer with TRAF3. Associates with TNFRSF5/CD40 through interaction with TRAF3. Associates with LTBR/TNFRSF3, TNFRSF4, TNFRSF8/CD30, TNFRSF11A/RANK, TNFRSF13B/TACI, TNFRSF14, TNFRSF17, TNFRSF19/TROY, RIPK2, MAP3K14, MAP3K5, and TRAF and TNF receptor associated protein TDP2. Interacts (via C-terminus) with EIF2AK2/PKR (via the kinase catalytic domain). Post-translationally, ubiquitinated at Lys-318 by the SCF(FBXL2) complex, leading to its degradation by the proteasome. Expressed in spleen, thymus, prostate, testis, ovary, small intestine, colon, and peripheral blood.

It localises to the cytoplasm. The protein resides in the cytosol. Adapter protein and signal transducer that links members of the tumor necrosis factor receptor family to different signaling pathways by association with the receptor cytoplasmic domain and kinases. Mediates activation of NF-kappa-B and probably JNK. Seems to be involved in apoptosis. Plays a role in mediating activation of NF-kappa-B by EIF2AK2/PKR. This is TNF receptor-associated factor 5 (TRAF5) from Homo sapiens (Human).